Here is a 536-residue protein sequence, read N- to C-terminus: Chaperonin GroEL (536 aa).

ATP-binding positions include Thr29–Pro32, Asp86–Thr90, Gly412, and Asp493.

The protein belongs to the chaperonin (HSP60) family. Forms a cylinder of 14 subunits composed of two heptameric rings stacked back-to-back. Interacts with the co-chaperonin GroES.

Its subcellular location is the cytoplasm. The enzyme catalyses ATP + H2O + a folded polypeptide = ADP + phosphate + an unfolded polypeptide.. Together with its co-chaperonin GroES, plays an essential role in assisting protein folding. The GroEL-GroES system forms a nano-cage that allows encapsulation of the non-native substrate proteins and provides a physical environment optimized to promote and accelerate protein folding. This chain is Chaperonin GroEL, found in Aster yellows witches'-broom phytoplasma (strain AYWB).